Consider the following 177-residue polypeptide: Protein VERNALIZATION 3 (177 aa).

Belongs to the phosphatidylethanolamine-binding protein family. Expressed in leaves but not in shoot apex.

Its function is as follows. Involved in the regulation of vernalization and of flowering time; this process in essential for flowering in cv. Bd29-1 but seems do not occur in cv. Bd21. The polypeptide is Protein VERNALIZATION 3 (Brachypodium distachyon (Purple false brome)).